Here is a 350-residue protein sequence, read N- to C-terminus: Nicotinate-nucleotide--dimethylbenzimidazole phosphoribosyltransferase (350 aa).

Glu-317 acts as the Proton acceptor in catalysis.

The protein belongs to the CobT family.

It carries out the reaction 5,6-dimethylbenzimidazole + nicotinate beta-D-ribonucleotide = alpha-ribazole 5'-phosphate + nicotinate + H(+). It functions in the pathway nucleoside biosynthesis; alpha-ribazole biosynthesis; alpha-ribazole from 5,6-dimethylbenzimidazole: step 1/2. Its function is as follows. Catalyzes the synthesis of alpha-ribazole-5'-phosphate from nicotinate mononucleotide (NAMN) and 5,6-dimethylbenzimidazole (DMB). This chain is Nicotinate-nucleotide--dimethylbenzimidazole phosphoribosyltransferase, found in Shewanella sp. (strain ANA-3).